Reading from the N-terminus, the 404-residue chain is NADH-quinone oxidoreductase subunit D 2 (404 aa).

Belongs to the complex I 49 kDa subunit family. NDH-1 is composed of 14 different subunits. Subunits NuoB, C, D, E, F, and G constitute the peripheral sector of the complex.

Its subcellular location is the cell inner membrane. The catalysed reaction is a quinone + NADH + 5 H(+)(in) = a quinol + NAD(+) + 4 H(+)(out). In terms of biological role, NDH-1 shuttles electrons from NADH, via FMN and iron-sulfur (Fe-S) centers, to quinones in the respiratory chain. The immediate electron acceptor for the enzyme in this species is believed to be ubiquinone. Couples the redox reaction to proton translocation (for every two electrons transferred, four hydrogen ions are translocated across the cytoplasmic membrane), and thus conserves the redox energy in a proton gradient. The chain is NADH-quinone oxidoreductase subunit D 2 from Rhizobium etli (strain CIAT 652).